The following is a 330-amino-acid chain: Glycerol-3-phosphate dehydrogenase [NAD(P)+] (330 aa).

The NADPH site is built by Trp-11, Arg-31, His-32, and Lys-105. Sn-glycerol 3-phosphate contacts are provided by Lys-105 and Gly-133. Ala-137 is an NADPH binding site. Sn-glycerol 3-phosphate is bound by residues Lys-188, Asp-241, Ser-251, Arg-252, and Asn-253. The Proton acceptor role is filled by Lys-188. Arg-252 lines the NADPH pocket. The NADPH site is built by Leu-277 and Glu-279.

It belongs to the NAD-dependent glycerol-3-phosphate dehydrogenase family.

Its subcellular location is the cytoplasm. It catalyses the reaction sn-glycerol 3-phosphate + NAD(+) = dihydroxyacetone phosphate + NADH + H(+). The catalysed reaction is sn-glycerol 3-phosphate + NADP(+) = dihydroxyacetone phosphate + NADPH + H(+). The protein operates within membrane lipid metabolism; glycerophospholipid metabolism. Catalyzes the reduction of the glycolytic intermediate dihydroxyacetone phosphate (DHAP) to sn-glycerol 3-phosphate (G3P), the key precursor for phospholipid synthesis. The protein is Glycerol-3-phosphate dehydrogenase [NAD(P)+] of Orientia tsutsugamushi (strain Boryong) (Rickettsia tsutsugamushi).